The chain runs to 156 residues: ATP synthase subunit b (156 aa).

The chain crosses the membrane as a helical span at residues 12–32 (VAFLIFVLFCMKFVWPPVIAA).

It belongs to the ATPase B chain family. In terms of assembly, F-type ATPases have 2 components, F(1) - the catalytic core - and F(0) - the membrane proton channel. F(1) has five subunits: alpha(3), beta(3), gamma(1), delta(1), epsilon(1). F(0) has three main subunits: a(1), b(2) and c(10-14). The alpha and beta chains form an alternating ring which encloses part of the gamma chain. F(1) is attached to F(0) by a central stalk formed by the gamma and epsilon chains, while a peripheral stalk is formed by the delta and b chains.

It localises to the cell inner membrane. F(1)F(0) ATP synthase produces ATP from ADP in the presence of a proton or sodium gradient. F-type ATPases consist of two structural domains, F(1) containing the extramembraneous catalytic core and F(0) containing the membrane proton channel, linked together by a central stalk and a peripheral stalk. During catalysis, ATP synthesis in the catalytic domain of F(1) is coupled via a rotary mechanism of the central stalk subunits to proton translocation. Functionally, component of the F(0) channel, it forms part of the peripheral stalk, linking F(1) to F(0). This chain is ATP synthase subunit b, found in Pseudomonas fluorescens (strain Pf0-1).